The primary structure comprises 191 residues: Pentapeptide repeat protein MfpA (191 aa).

Positions Cys-115–Gly-154 constitute a Pentapeptide repeat domain.

This sequence belongs to the pentapeptide repeat protein family. Homodimer. Probably interacts with DNA gyrase.

In terms of biological role, when present on multicopy plasmids confers increased resistance to fluoroquinolone antibiotics such as ciprofloxacin and sparfloxacin but not the quinolone nalidixic acid. Forms a structure that exhibits size, shape and electrostatic similarity to B-form DNA; it may bind to DNA gyrase which is postulated to protect it from fluoroquinolones. This Mycolicibacterium smegmatis (strain ATCC 700084 / mc(2)155) (Mycobacterium smegmatis) protein is Pentapeptide repeat protein MfpA.